A 331-amino-acid polypeptide reads, in one-letter code: Ketol-acid reductoisomerase (NADP(+)) (331 aa).

The KARI N-terminal Rossmann domain occupies 2–182 (AQLFYDSDAD…GGTRAGILET (181 aa)). NADP(+)-binding positions include 25–28 (YGSQ), serine 51, serine 53, and 83–86 (DEFQ). Residue histidine 108 is part of the active site. Position 134 (glycine 134) interacts with NADP(+). The 146-residue stretch at 183 to 328 (NFKEETETDL…KGLRSMFSWL (146 aa)) folds into the KARI C-terminal knotted domain. Residues aspartate 191, glutamate 195, glutamate 227, and glutamate 231 each contribute to the Mg(2+) site. Serine 252 contributes to the substrate binding site.

It belongs to the ketol-acid reductoisomerase family. It depends on Mg(2+) as a cofactor.

The enzyme catalyses (2R)-2,3-dihydroxy-3-methylbutanoate + NADP(+) = (2S)-2-acetolactate + NADPH + H(+). It carries out the reaction (2R,3R)-2,3-dihydroxy-3-methylpentanoate + NADP(+) = (S)-2-ethyl-2-hydroxy-3-oxobutanoate + NADPH + H(+). The protein operates within amino-acid biosynthesis; L-isoleucine biosynthesis; L-isoleucine from 2-oxobutanoate: step 2/4. It functions in the pathway amino-acid biosynthesis; L-valine biosynthesis; L-valine from pyruvate: step 2/4. Its function is as follows. Involved in the biosynthesis of branched-chain amino acids (BCAA). Catalyzes an alkyl-migration followed by a ketol-acid reduction of (S)-2-acetolactate (S2AL) to yield (R)-2,3-dihydroxy-isovalerate. In the isomerase reaction, S2AL is rearranged via a Mg-dependent methyl migration to produce 3-hydroxy-3-methyl-2-ketobutyrate (HMKB). In the reductase reaction, this 2-ketoacid undergoes a metal-dependent reduction by NADPH to yield (R)-2,3-dihydroxy-isovalerate. In Synechococcus sp. (strain CC9605), this protein is Ketol-acid reductoisomerase (NADP(+)).